A 327-amino-acid polypeptide reads, in one-letter code: Altered inheritance rate of mitochondria protein 25 (327 aa).

Belongs to the phospholipid scramblase family.

Its subcellular location is the mitochondrion. This chain is Altered inheritance rate of mitochondria protein 25 (AIM25), found in Saccharomyces cerevisiae (strain ATCC 204508 / S288c) (Baker's yeast).